Here is a 723-residue protein sequence, read N- to C-terminus: Beta-xylosidase (723 aa).

A signal peptide spans 1–19 (MKKLWLMGLLLASFFTTVA).

It belongs to the glycosyl hydrolase 3 family.

The protein localises to the periplasm. Xylosidase involved in ulvan degradation. Ulvan is the main polysaccharide component of the Ulvales (green seaweed) cell wall. It is composed of disaccharide building blocks comprising 3-sulfated rhamnose (Rha3S) linked to D-glucuronic acid (GlcA), L-iduronic acid (IduA), or D-xylose (Xyl). Beta-xylosidase converts Xyl-Rha3S, a product of alpha-L-rhamnosidase acting on Rha-Xyl-Rha3S oligosaccharides, further to Xyl and Rha3S. The enzyme is able to degrade 4-methylumbelliferyl-beta-D-xylopyranoside (MUX) in vitro. This is Beta-xylosidase from Formosa agariphila (strain DSM 15362 / KCTC 12365 / LMG 23005 / KMM 3901 / M-2Alg 35-1).